The sequence spans 351 residues: N-terminal EF-hand calcium-binding protein 1 (351 aa).

Ser-4 carries the post-translational modification Phosphoserine. 2 consecutive EF-hand domains span residues 26–61 (KGMS…GVLS) and 60–95 (LSGE…HLGE). Ca(2+) is bound by residues Asp-39, Asn-41, Asp-43, Lys-45, and Glu-50. A coiled-coil region spans residues 135–163 (LLKETLNQLQSLQNSLECAMETTEEQTRQ). The segment at 180–203 (GKRSSRRVQRHNSFSPNSPQFNVS) is disordered. Residues 190 to 202 (HNSFSPNSPQFNV) show a composition bias toward polar residues. 2 positions are modified to phosphoserine: Ser-192 and Ser-197. A coiled-coil region spans residues 209–275 (EEDNQWMTQI…EEFQLALKHY (67 aa)). An ABM domain is found at 252 to 340 (MLVQRQMSVI…LETPELTSTM (89 aa)).

Interacts with STX1. May interact with CPNE6. Expressed in brain (at protein level).

It localises to the cytoplasm. This is N-terminal EF-hand calcium-binding protein 1 (NECAB1) from Homo sapiens (Human).